We begin with the raw amino-acid sequence, 262 residues long: Acidic leucine-rich nuclear phosphoprotein 32 family member B (262 aa).

4 LRR repeats span residues 16–40 (PGEVKELVLDNCRSDDGKIVGLSSD), 43–64 (NLEFLSMINVNLLSISNLPKLN), 65–87 (KLRKLELSDNRISGGLEVLAERT), and 89–110 (NLTHLNLSGNKIKDINTLEPLK). Positions 123 to 161 (CEVTMLINYRESVFTLLPQLTYLDGFDADEQEAPDSDPE) constitute an LRRCT domain. Over residues 150–233 (ADEQEAPDSD…EDEEDDEADD (84 aa)) the composition is skewed to acidic residues. The disordered stretch occupies residues 150–262 (ADEQEAPDSD…PEDEEDDEDD (113 aa)). Positions 240–243 (KRKR) match the Nuclear localization signal motif. A compositionally biased stretch (acidic residues) spans 247–262 (DEGEEDPEDEEDDEDD).

Belongs to the ANP32 family. In terms of assembly, interacts with histones H3 and H4. Interacts with KLF5; this interaction induces promoter region-specific histone incorporation and inhibition of histone acetylation by ANP32B. Post-translationally, directly cleaved by caspase-3/CASP3.

It is found in the nucleus. Its function is as follows. Multifunctional protein that is involved in the regulation of many processes including cell proliferation, apoptosis, cell cycle progression or transcription. Regulates the proliferation of neuronal stem cells, differentiation of leukemic cells and progression from G1 to S phase of the cell cycle. As negative regulator of caspase-3-dependent apoptosis, may act as an antagonist of ANP32A in regulating tissue homeostasis. Exhibits histone chaperone properties, able to recruit histones to certain promoters, thus regulating the transcription of specific genes. Also plays an essential role in the nucleocytoplasmic transport of specific mRNAs via the uncommon nuclear mRNA export receptor XPO1/CRM1. This Gallus gallus (Chicken) protein is Acidic leucine-rich nuclear phosphoprotein 32 family member B (ANP32B).